A 278-amino-acid polypeptide reads, in one-letter code: MTVLHSVDFFPSGNASVAIEPRLPQADFPEHHHDFHEIVIVEHGTGIHVFNGQPYTITGGTVCFVRDHDRHLYEHTDNLCLTNVLYRSPDRFQFLAGLNQLLPQEQDGQYPSHWRVNHSVLQQVRQLVAQMEQQEEENDLPSTASREILFMQLLLLLRKSSLQENLENSASRLNLLLAWLEDHFADEVNWDAVADQFSLSLRTLHRQLKQQTGLTPQRYLNRLRLMKARHLLRHSEASVTDIAYRCGFSDSNHFSTLFRREFNWSPRDIRQGRDGFLQ.

Residues 174–272 (NLLLAWLEDH…NWSPRDIRQG (99 aa)) form the HTH araC/xylS-type domain. DNA-binding regions (H-T-H motif) lie at residues 191 to 212 (DAVA…KQQT) and 239 to 262 (VTDI…RREF).

As to quaternary structure, binds DNA as a dimer.

The protein resides in the cytoplasm. Its function is as follows. Activates expression of the rhaBAD and rhaT operons. In Escherichia coli (strain SMS-3-5 / SECEC), this protein is HTH-type transcriptional activator RhaS.